Here is a 219-residue protein sequence, read N- to C-terminus: 7-cyano-7-deazaguanine synthase (219 aa).

Residue 10–20 (FSGGQDSTTCL) coordinates ATP. 4 residues coordinate Zn(2+): Cys188, Cys197, Cys200, and Cys203.

This sequence belongs to the QueC family. In terms of assembly, homodimer. The cofactor is Zn(2+).

The enzyme catalyses 7-carboxy-7-deazaguanine + NH4(+) + ATP = 7-cyano-7-deazaguanine + ADP + phosphate + H2O + H(+). It functions in the pathway purine metabolism; 7-cyano-7-deazaguanine biosynthesis. Catalyzes the ATP-dependent conversion of 7-carboxy-7-deazaguanine (CDG) to 7-cyano-7-deazaguanine (preQ(0)). The sequence is that of 7-cyano-7-deazaguanine synthase from Clostridium botulinum (strain Loch Maree / Type A3).